The following is a 377-amino-acid chain: tRNA-specific 2-thiouridylase MnmA (377 aa).

ATP is bound by residues 18–25 and Met-44; that span reads AMSGGVDS. Cys-113 functions as the Nucleophile in the catalytic mechanism. An intrachain disulfide couples Cys-113 to Cys-210. Gly-137 contacts ATP. An interaction with tRNA region spans residues 159–161; it reads RDQ. The active-site Cysteine persulfide intermediate is the Cys-210.

The protein belongs to the MnmA/TRMU family.

Its subcellular location is the cytoplasm. The enzyme catalyses S-sulfanyl-L-cysteinyl-[protein] + uridine(34) in tRNA + AH2 + ATP = 2-thiouridine(34) in tRNA + L-cysteinyl-[protein] + A + AMP + diphosphate + H(+). Catalyzes the 2-thiolation of uridine at the wobble position (U34) of tRNA, leading to the formation of s(2)U34. The chain is tRNA-specific 2-thiouridylase MnmA from Rhodospirillum rubrum (strain ATCC 11170 / ATH 1.1.1 / DSM 467 / LMG 4362 / NCIMB 8255 / S1).